An 866-amino-acid chain; its full sequence is Leucine--tRNA ligase (866 aa).

Residues 42 to 52 (PYPSGKLHMGH) carry the 'HIGH' region motif. A 'KMSKS' region motif is present at residues 624 to 628 (TMSKS). Lys-627 lines the ATP pocket.

Belongs to the class-I aminoacyl-tRNA synthetase family.

Its subcellular location is the cytoplasm. It catalyses the reaction tRNA(Leu) + L-leucine + ATP = L-leucyl-tRNA(Leu) + AMP + diphosphate. This chain is Leucine--tRNA ligase, found in Nitrosospira multiformis (strain ATCC 25196 / NCIMB 11849 / C 71).